A 115-amino-acid chain; its full sequence is UPF0122 protein lp_1634 (115 aa).

Belongs to the UPF0122 family.

In terms of biological role, might take part in the signal recognition particle (SRP) pathway. This is inferred from the conservation of its genetic proximity to ftsY/ffh. May be a regulatory protein. The chain is UPF0122 protein lp_1634 from Lactiplantibacillus plantarum (strain ATCC BAA-793 / NCIMB 8826 / WCFS1) (Lactobacillus plantarum).